A 634-amino-acid chain; its full sequence is Polyadenylate-binding protein 1A (634 aa).

RRM domains lie at 11–89 (ASLY…WSQR), 99–175 (GNIF…RFKS), 191–268 (TNVY…RAQK), and 294–370 (VNLY…LAQR). Residues 541–618 (QEPLTASMLA…AVAVLQAHQA (78 aa)) enclose the PABC domain.

Belongs to the polyadenylate-binding protein type-1 family. In terms of assembly, interacts with ybx1; interaction recruits pabpc1a on C5-methylcytosine (m5C)-containing mRNAs, preventing their degradation.

The protein resides in the cytoplasm. Functionally, binds the poly(A) tail of mRNA. Prevents mRNA deadenylation and confers poly(A) stability. Binds to N6-methyladenosine (m6A)-containing mRNAs. Stimulates the translation of mRNAs to which it is bound, acting, at least in part, with dazl. Involved in the maternal-to-zygotic transition in early embryo via interaction with ybx1: interaction recruits pabpc1a on C5-methylcytosine (m5C)-containing maternal mRNAs, preventing their degradation. The protein is Polyadenylate-binding protein 1A of Danio rerio (Zebrafish).